The chain runs to 221 residues: MKFYRDHTWPSTLEEAIVIQEKLRDQVITEDQLEEPIQYVAGVDMGFEADGTISRAAVAVLSFPDLQVIETSLAHRPTTFPYVPGFLSFREIPAVLDALEKIQTTPNIILCDGQGIAHPRRLGIASHLGLLIDMPTIGVAKSRLVGKYEELAETKGSSQPLIYNGETVGVVLRSRTGVKPLYISSGHRISLPTAIDYVLRCTPKYRLPETTRIADKLASAK.

Residues Asp44 and Asp112 each contribute to the Mg(2+) site.

It belongs to the endonuclease V family. Mg(2+) is required as a cofactor.

It localises to the cytoplasm. The catalysed reaction is Endonucleolytic cleavage at apurinic or apyrimidinic sites to products with a 5'-phosphate.. In terms of biological role, DNA repair enzyme involved in the repair of deaminated bases. Selectively cleaves double-stranded DNA at the second phosphodiester bond 3' to a deoxyinosine leaving behind the intact lesion on the nicked DNA. This chain is Endonuclease V, found in Nostoc punctiforme (strain ATCC 29133 / PCC 73102).